A 251-amino-acid chain; its full sequence is 5-oxoprolinase subunit A 3 (251 aa).

This sequence belongs to the LamB/PxpA family. In terms of assembly, forms a complex composed of PxpA, PxpB and PxpC.

The enzyme catalyses 5-oxo-L-proline + ATP + 2 H2O = L-glutamate + ADP + phosphate + H(+). Functionally, catalyzes the cleavage of 5-oxoproline to form L-glutamate coupled to the hydrolysis of ATP to ADP and inorganic phosphate. The sequence is that of 5-oxoprolinase subunit A 3 from Pseudomonas aeruginosa (strain ATCC 15692 / DSM 22644 / CIP 104116 / JCM 14847 / LMG 12228 / 1C / PRS 101 / PAO1).